Here is a 365-residue protein sequence, read N- to C-terminus: Centrosomal protein of 41 kDa B (365 aa).

The segment covering 1–14 has biased composition (basic and acidic residues); it reads MSAKRSIGDPEILK. 2 disordered regions span residues 1-23 and 104-123; these read MSAK…NQKY and EFLT…SKSP. Residues 177 to 274 enclose the Rhodanese domain; that stretch reads EDCPFLLLDV…ISQKFPQGLT (98 aa). Residues 329–365 form a disordered region; that stretch reads TSTPSRLRLDSRNSKVPSSASSARSLSSTSSHSKPWK. The segment covering 342-365 has biased composition (low complexity); it reads SKVPSSASSARSLSSTSSHSKPWK.

This sequence belongs to the CEP41 family.

Its subcellular location is the cytoplasm. It is found in the cytoskeleton. The protein localises to the microtubule organizing center. The protein resides in the centrosome. It localises to the cell projection. Its subcellular location is the cilium. It is found in the cilium basal body. Functionally, required during ciliogenesis for tubulin glutamylation in cilium. Probably acts by participating in the transport of tubulin polyglutamylases between the basal body and the cilium. This is Centrosomal protein of 41 kDa B (cep41-b) from Xenopus laevis (African clawed frog).